We begin with the raw amino-acid sequence, 95 residues long: Aspartyl/glutamyl-tRNA(Asn/Gln) amidotransferase subunit C (95 aa).

Belongs to the GatC family. Heterotrimer of A, B and C subunits.

The enzyme catalyses L-glutamyl-tRNA(Gln) + L-glutamine + ATP + H2O = L-glutaminyl-tRNA(Gln) + L-glutamate + ADP + phosphate + H(+). It catalyses the reaction L-aspartyl-tRNA(Asn) + L-glutamine + ATP + H2O = L-asparaginyl-tRNA(Asn) + L-glutamate + ADP + phosphate + 2 H(+). Its function is as follows. Allows the formation of correctly charged Asn-tRNA(Asn) or Gln-tRNA(Gln) through the transamidation of misacylated Asp-tRNA(Asn) or Glu-tRNA(Gln) in organisms which lack either or both of asparaginyl-tRNA or glutaminyl-tRNA synthetases. The reaction takes place in the presence of glutamine and ATP through an activated phospho-Asp-tRNA(Asn) or phospho-Glu-tRNA(Gln). This is Aspartyl/glutamyl-tRNA(Asn/Gln) amidotransferase subunit C from Anaeromyxobacter sp. (strain Fw109-5).